The primary structure comprises 416 residues: Multifunctional CCA protein (416 aa).

Positions 8 and 11 each coordinate ATP. CTP-binding residues include glycine 8 and arginine 11. Positions 21 and 23 each coordinate Mg(2+). Positions 91, 137, and 140 each coordinate ATP. Arginine 91, arginine 137, and arginine 140 together coordinate CTP. The HD domain maps to 228-329; the sequence is TGLHTMMVLA…IKLFDKADFW (102 aa).

This sequence belongs to the tRNA nucleotidyltransferase/poly(A) polymerase family. Bacterial CCA-adding enzyme type 1 subfamily. In terms of assembly, monomer. Can also form homodimers and oligomers. Mg(2+) serves as cofactor. The cofactor is Ni(2+).

It catalyses the reaction a tRNA precursor + 2 CTP + ATP = a tRNA with a 3' CCA end + 3 diphosphate. The enzyme catalyses a tRNA with a 3' CCA end + 2 CTP + ATP = a tRNA with a 3' CCACCA end + 3 diphosphate. In terms of biological role, catalyzes the addition and repair of the essential 3'-terminal CCA sequence in tRNAs without using a nucleic acid template. Adds these three nucleotides in the order of C, C, and A to the tRNA nucleotide-73, using CTP and ATP as substrates and producing inorganic pyrophosphate. tRNA 3'-terminal CCA addition is required both for tRNA processing and repair. Also involved in tRNA surveillance by mediating tandem CCA addition to generate a CCACCA at the 3' terminus of unstable tRNAs. While stable tRNAs receive only 3'-terminal CCA, unstable tRNAs are marked with CCACCA and rapidly degraded. The polypeptide is Multifunctional CCA protein (Shewanella sp. (strain MR-7)).